Here is an 876-residue protein sequence, read N- to C-terminus: Paramyosin (876 aa).

The nonhelical region stretch occupies residues 1 to 28 (MSARSAKFMYRSGNAGASGDLSVEYGTD). Residues 29–855 (LGALTRLEDK…IRAKHRSWVT (827 aa)) are a coiled coil. A nonhelical region region spans residues 856-876 (TSQVPGGTRQVFVTQEEQSNY).

It belongs to the paramyosin family. Homodimer.

It is found in the cytoplasm. The protein localises to the myofibril. In terms of biological role, paramyosin is a major structural component of many thick filaments isolated from invertebrate muscles. The chain is Paramyosin from Sarcoptes scabiei (Itch mite).